We begin with the raw amino-acid sequence, 108 residues long: Circadian clock oscillator protein KaiB (108 aa).

Belongs to the KaiB family. Homodimer, interacts with KaiC. The KaiABC complex composition changes during the circadian cycle to control KaiC phosphorylation. Complexes KaiC(6), KaiA(2-4):KaiC(6), KaiB(6):KaiC(6) and KaiC(6):KaiB(6):KaiA(12) are among the most important forms, many form cooperatively. Undergoes a major conformational rearrangment; in the free state forms homotetramers as a dimer of dimers. When bound to the CI domain of KaiC switches to a monomeric thioredoxin-fold (KaiB(fs)). KaiB(fs) binds CikA, leading it to dephosphorylate phospho-RpaA.

Functionally, key component of the KaiABC oscillator complex, which constitutes the main circadian regulator in cyanobacteria. Complex composition changes during the circadian cycle to control KaiC phosphorylation. KaiA stimulates KaiC autophosphorylation, while KaiB sequesters KaiA, leading to KaiC autodephosphorylation. Phospho-Ser-431 KaiC accumulation triggers binding of KaiB to form the KaiB(6):KaiC(6) complex, leading to changes in output regulators CikA and SasA. KaiB switches to a thioredoxin-like fold (KaiB(fs)) when bound to KaiC. KaiB(6):KaiC(6) formation exposes a site for KaiA binding that sequesters KaiA from KaiC, making the KaiC(6):KaiB(6):KaiA(12) complex that results in KaiC autodephosphorylation. Its function is as follows. A metamorphic protein which reversibly switches between an inactive tetrameric fold and a rare, thioredoxin-like monomeric fold (KaiB(fs)). KaiB(fs) binds phospho-KaiC, KaiA and CikA. KaiA and CikA compete for binding to KaiB(fs), and KaiB(fs) and SasA compete for binding to KaiC, thus the clock oscillator and output signal pathway are tightly coupled. The protein is Circadian clock oscillator protein KaiB of Nostoc sp. (strain PCC 7120 / SAG 25.82 / UTEX 2576).